Consider the following 597-residue polypeptide: Fructan 1-exohydrolase (597 aa).

Residues 1 to 15 (MAQAWAFLLPVLVFG) form the signal peptide. The active site involves Asp76. N-linked (GlcNAc...) asparagine glycosylation is found at Asn169, Asn237, and Asn249. Residues Cys447 and Cys493 are joined by a disulfide bond. A glycan (N-linked (GlcNAc...) asparagine) is linked at Asn568.

This sequence belongs to the glycosyl hydrolase 32 family.

The enzyme catalyses Hydrolysis of terminal, non-reducing (2-&gt;1)-linked beta-D-fructofuranose residues in fructans.. With respect to regulation, inhibited by sucrose. Hydrolyzes inulin-type beta-(2,1)-fructans. May play a role as a beta-(2,1)-trimmer during graminan biosynthesis. In Triticum urartu (Red wild einkorn), this protein is Fructan 1-exohydrolase.